A 520-amino-acid polypeptide reads, in one-letter code: GMP synthase [glutamine-hydrolyzing] (520 aa).

Residues 9–202 (TILIIDFGSQ…VHRIVGVKPG (194 aa)) form the Glutamine amidotransferase type-1 domain. Cys-86 functions as the Nucleophile in the catalytic mechanism. Residues His-176 and Glu-178 contribute to the active site. In terms of domain architecture, GMPS ATP-PPase spans 203-395 (WTMGAYREQA…LGLPDSFIGR (193 aa)). 230-236 (SGGVDSS) contacts ATP.

In terms of assembly, homodimer.

It catalyses the reaction XMP + L-glutamine + ATP + H2O = GMP + L-glutamate + AMP + diphosphate + 2 H(+). It functions in the pathway purine metabolism; GMP biosynthesis; GMP from XMP (L-Gln route): step 1/1. Its function is as follows. Catalyzes the synthesis of GMP from XMP. The chain is GMP synthase [glutamine-hydrolyzing] from Brucella ovis (strain ATCC 25840 / 63/290 / NCTC 10512).